Here is a 311-residue protein sequence, read N- to C-terminus: Aspartate carbamoyltransferase catalytic subunit (311 aa).

Positions 55 and 56 each coordinate carbamoyl phosphate. Lys-85 contributes to the L-aspartate binding site. Carbamoyl phosphate-binding residues include Arg-106, His-135, and Gln-138. Positions 168 and 230 each coordinate L-aspartate. 2 residues coordinate carbamoyl phosphate: Leu-268 and Pro-269.

This sequence belongs to the aspartate/ornithine carbamoyltransferase superfamily. ATCase family. Heterododecamer (2C3:3R2) of six catalytic PyrB chains organized as two trimers (C3), and six regulatory PyrI chains organized as three dimers (R2).

It carries out the reaction carbamoyl phosphate + L-aspartate = N-carbamoyl-L-aspartate + phosphate + H(+). It participates in pyrimidine metabolism; UMP biosynthesis via de novo pathway; (S)-dihydroorotate from bicarbonate: step 2/3. Catalyzes the condensation of carbamoyl phosphate and aspartate to form carbamoyl aspartate and inorganic phosphate, the committed step in the de novo pyrimidine nucleotide biosynthesis pathway. This Salmonella paratyphi C (strain RKS4594) protein is Aspartate carbamoyltransferase catalytic subunit.